The chain runs to 379 residues: 23S rRNA (uracil(747)-C(5))-methyltransferase RlmC (379 aa).

[4Fe-4S] cluster contacts are provided by C3, C11, C14, and C87. S-adenosyl-L-methionine is bound by residues Q212, F241, E262, and N309. The Nucleophile role is filled by C336.

It belongs to the class I-like SAM-binding methyltransferase superfamily. RNA M5U methyltransferase family. RlmC subfamily.

The enzyme catalyses uridine(747) in 23S rRNA + S-adenosyl-L-methionine = 5-methyluridine(747) in 23S rRNA + S-adenosyl-L-homocysteine + H(+). Catalyzes the formation of 5-methyl-uridine at position 747 (m5U747) in 23S rRNA. The polypeptide is 23S rRNA (uracil(747)-C(5))-methyltransferase RlmC (Shewanella loihica (strain ATCC BAA-1088 / PV-4)).